The following is a 172-amino-acid chain: Keratin-associated protein 13-3 (172 aa).

5 repeat units span residues 46–55 (CQLGSSLYRG), 56–65 (CQETCWRPNS), 66–75 (CQTLCVESSP), 76–85 (CHTSCYYPRT), and 92–101 (CLTMHVGSRG). A 5 X 10 AA approximate repeats region spans residues 46–101 (CQLGSSLYRGCQETCWRPNSCQTLCVESSPCHTSCYYPRTHMLCNSCLTMHVGSRG).

It belongs to the PMG family. In terms of assembly, interacts with hair keratins.

Functionally, in the hair cortex, hair keratin intermediate filaments are embedded in an interfilamentous matrix, consisting of hair keratin-associated proteins (KRTAP), which are essential for the formation of a rigid and resistant hair shaft through their extensive disulfide bond cross-linking with abundant cysteine residues of hair keratins. The matrix proteins include the high-sulfur and high-glycine-tyrosine keratins. The chain is Keratin-associated protein 13-3 (KRTAP13-3) from Homo sapiens (Human).